Consider the following 270-residue polypeptide: uncharacterized protein (270 aa).

This sequence to T.pallidum TP_0127, TP_0315 and TP_0618.

This is an uncharacterized protein from Treponema pallidum (strain Nichols).